Consider the following 350-residue polypeptide: Atypical chemokine receptor 4 (350 aa).

The Extracellular portion of the chain corresponds to 1–41 (MAVEYNQSTDYYYEENEMNDTHDYSQYEVICIKEEVRKFAK). N-linked (GlcNAc...) asparagine glycans are attached at residues Asn-6 and Asn-19. Residues 42-66 (VFLPAFFTIAFIIGLAGNSTVVAIY) form a helical membrane-spanning segment. At 67 to 79 (AYYKKRRTKTDVY) the chain is on the cytoplasmic side. Residues 80 to 99 (ILNLAVADLFLLFTLPFWAV) traverse the membrane as a helical segment. The Extracellular portion of the chain corresponds to 100 to 113 (NAVHGWVLGKIMCK). A disulfide bridge links Cys-112 with Cys-184. Residues 114–135 (VTSALYTVNFVSGMQFLACIST) form a helical membrane-spanning segment. Residues 136–153 (DRYWAVTKAPSQSGVGKP) lie on the Cytoplasmic side of the membrane. A helical transmembrane segment spans residues 154–175 (CWVICFCVWVAAILLSIPQLVF). The Extracellular segment spans residues 176-199 (YTVNHKARCVPIFPYHLGTSMKAS). The chain crosses the membrane as a helical span at residues 200–222 (IQILEICIGFIIPFLIMAVCYFI). Residues 223 to 241 (TAKTLIKMPNIKKSQPLKV) are Cytoplasmic-facing. Residues 242–265 (LFTVVIVFIVTQLPYNIVKFCQAI) form a helical membrane-spanning segment. At 266-283 (DIIYSLITDCDMSKRMDV) the chain is on the extracellular side. The chain crosses the membrane as a helical span at residues 284 to 306 (AIQITESIALFHSCLNPVLYVFM). Residues 307–350 (GTSFKNYIMKVAKKYGSWRRQRQNVEEIPFESEDATEPTSTFSI) lie on the Cytoplasmic side of the membrane.

The protein belongs to the G-protein coupled receptor 1 family. Atypical chemokine receptor subfamily. In terms of assembly, forms heteromers with CXCR3. Interacts with ARRB1 and ARRB2. In terms of processing, the Ser/Thr residues in the C-terminal cytoplasmic tail may be phosphorylated. Expressed in circumvallate and fungiform papillae, olfactory epithelium and lung. Lower expression in liver, kidney and tongue epithelium bearing no taste papillae. Very low expression in the cerebral cortex of the brain.

The protein resides in the early endosome. It is found in the recycling endosome. It localises to the cell membrane. Functionally, atypical chemokine receptor that controls chemokine levels and localization via high-affinity chemokine binding that is uncoupled from classic ligand-driven signal transduction cascades, resulting instead in chemokine sequestration, degradation, or transcytosis. Also known as interceptor (internalizing receptor) or chemokine-scavenging receptor or chemokine decoy receptor. Acts as a receptor for chemokines CCL2, CCL8, CCL13, CCL19, CCL21 and CCL25. Chemokine-binding does not activate G-protein-mediated signal transduction but instead induces beta-arrestin recruitment, leading to ligand internalization. Plays an important role in controlling the migration of immune and cancer cells that express chemokine receptors CCR7 and CCR9, by reducing the availability of CCL19, CCL21, and CCL25 through internalization. Negatively regulates CXCR3-induced chemotaxis. Regulates T-cell development in the thymus. This Bos taurus (Bovine) protein is Atypical chemokine receptor 4 (ACKR4).